The primary structure comprises 249 residues: 2,3-bisphosphoglycerate-dependent phosphoglycerate mutase (249 aa).

Substrate contacts are provided by residues 8–15 (RHGESTWN), 21–22 (TG), R60, 87–90 (ERHY), K98, 114–115 (RR), and 183–184 (GN). H9 serves as the catalytic Tele-phosphohistidine intermediate. E87 functions as the Proton donor/acceptor in the catalytic mechanism.

It belongs to the phosphoglycerate mutase family. BPG-dependent PGAM subfamily. In terms of assembly, homodimer.

It catalyses the reaction (2R)-2-phosphoglycerate = (2R)-3-phosphoglycerate. The protein operates within carbohydrate degradation; glycolysis; pyruvate from D-glyceraldehyde 3-phosphate: step 3/5. Its function is as follows. Catalyzes the interconversion of 2-phosphoglycerate and 3-phosphoglycerate. The chain is 2,3-bisphosphoglycerate-dependent phosphoglycerate mutase from Azoarcus sp. (strain BH72).